The following is a 608-amino-acid chain: Probable methyltransferase PMT3 (608 aa).

At 1-12 (MKGRSDGGQKKR) the chain is on the cytoplasmic side. Residues 13–33 (VIALVCVAAVVLVFVYLFYGS) form a helical; Signal-anchor for type II membrane protein membrane-spanning segment. Topologically, residues 34–608 (SDHRASAIEY…LTSESLRDME (575 aa)) are lumenal. Residue Asn-342 is glycosylated (N-linked (GlcNAc...) asparagine).

It belongs to the methyltransferase superfamily.

The protein localises to the golgi apparatus membrane. This Arabidopsis thaliana (Mouse-ear cress) protein is Probable methyltransferase PMT3.